Reading from the N-terminus, the 394-residue chain is MSKEKFQRIRTHINVGTIGHVDHGKTTLTAAITTVLSKKYGGCARAFDQIDNAPEEKARGITINTSHVEYDTEFRHYAHVDCPGHADYVKNMITGAAQMDGAILVVAATDGPMPQTREHILLARQVGVPHIVVFLNKCDMVDDLELLELVEMEVRELLSQYDFPGDSAPIIQGSALKALEGDEKWSSKVLELSSILDNYIPEPKRSIDKPFLLPIEDVFSISGRGTVVTGRVESGIIKVGEEVEIVGIKDTVKTTCTGIEMFRKLLDEGRAGENVGVLLRGTKRDEVERGQVLSKPGCIKPHSNFESEVYILNKDEGGRHTPFFKGYRPQFYFRTTDVTGTIELPKEVEMVMPGDNIKMVVHLISPIAMDDGLRFAIREGGRTVGAGVVSRVIS.

The tr-type G domain occupies 10 to 204 (RTHINVGTIG…ILDNYIPEPK (195 aa)). Residues 19 to 26 (GHVDHGKT) form a G1 region. 19 to 26 (GHVDHGKT) is a GTP binding site. Residue Thr26 coordinates Mg(2+). The segment at 60–64 (GITIN) is G2. Residues 81 to 84 (DCPG) are G3. GTP-binding positions include 81–85 (DCPGH) and 136–139 (NKCD). Positions 136–139 (NKCD) are G4. The tract at residues 174–176 (SAL) is G5.

Belongs to the TRAFAC class translation factor GTPase superfamily. Classic translation factor GTPase family. EF-Tu/EF-1A subfamily. As to quaternary structure, monomer.

Its subcellular location is the cytoplasm. It catalyses the reaction GTP + H2O = GDP + phosphate + H(+). In terms of biological role, GTP hydrolase that promotes the GTP-dependent binding of aminoacyl-tRNA to the A-site of ribosomes during protein biosynthesis. The chain is Elongation factor Tu from Blochmanniella floridana.